A 252-amino-acid polypeptide reads, in one-letter code: 5-oxoprolinase subunit A (252 aa).

This sequence belongs to the LamB/PxpA family. Forms a complex composed of PxpA, PxpB and PxpC.

The catalysed reaction is 5-oxo-L-proline + ATP + 2 H2O = L-glutamate + ADP + phosphate + H(+). Catalyzes the cleavage of 5-oxoproline to form L-glutamate coupled to the hydrolysis of ATP to ADP and inorganic phosphate. This chain is 5-oxoprolinase subunit A, found in Corynebacterium glutamicum (strain ATCC 13032 / DSM 20300 / JCM 1318 / BCRC 11384 / CCUG 27702 / LMG 3730 / NBRC 12168 / NCIMB 10025 / NRRL B-2784 / 534).